A 213-amino-acid polypeptide reads, in one-letter code: Thymidylate kinase (213 aa).

Position 10–17 (10–17) interacts with ATP; it reads GLEGAGKT.

It belongs to the thymidylate kinase family.

The catalysed reaction is dTMP + ATP = dTDP + ADP. In terms of biological role, phosphorylation of dTMP to form dTDP in both de novo and salvage pathways of dTTP synthesis. This is Thymidylate kinase from Shigella boydii serotype 18 (strain CDC 3083-94 / BS512).